A 173-amino-acid chain; its full sequence is dCTP deaminase, dUMP-forming (173 aa).

DCTP is bound by residues 93–98, Asp111, 119–121, Gln138, and Tyr151; these read RSSTGR and TLE. Residue Glu121 is the Proton donor/acceptor of the active site.

Belongs to the dCTP deaminase family. Homotrimer.

It carries out the reaction dCTP + 2 H2O = dUMP + NH4(+) + diphosphate. It participates in pyrimidine metabolism; dUMP biosynthesis; dUMP from dCTP: step 1/1. Bifunctional enzyme that catalyzes both the deamination of dCTP to dUTP and the hydrolysis of dUTP to dUMP without releasing the toxic dUTP intermediate. The protein is dCTP deaminase, dUMP-forming of Clostridium beijerinckii (strain ATCC 51743 / NCIMB 8052) (Clostridium acetobutylicum).